The sequence spans 424 residues: UDP-N-acetylglucosamine 1-carboxyvinyltransferase (424 aa).

Residue 22–23 (KN) participates in phosphoenolpyruvate binding. Arg98 serves as a coordination point for UDP-N-acetyl-alpha-D-glucosamine. Cys122 acts as the Proton donor in catalysis. Cys122 is subject to 2-(S-cysteinyl)pyruvic acid O-phosphothioketal. UDP-N-acetyl-alpha-D-glucosamine-binding positions include 127 to 131 (RPVDQ), Asp312, and Ile334.

The protein belongs to the EPSP synthase family. MurA subfamily.

The protein localises to the cytoplasm. It carries out the reaction phosphoenolpyruvate + UDP-N-acetyl-alpha-D-glucosamine = UDP-N-acetyl-3-O-(1-carboxyvinyl)-alpha-D-glucosamine + phosphate. The protein operates within cell wall biogenesis; peptidoglycan biosynthesis. Cell wall formation. Adds enolpyruvyl to UDP-N-acetylglucosamine. The sequence is that of UDP-N-acetylglucosamine 1-carboxyvinyltransferase from Xanthomonas axonopodis pv. citri (strain 306).